A 342-amino-acid chain; its full sequence is Nucleoid-associated protein Spea_1765 (342 aa).

Belongs to the YejK family.

It is found in the cytoplasm. The protein localises to the nucleoid. This chain is Nucleoid-associated protein Spea_1765, found in Shewanella pealeana (strain ATCC 700345 / ANG-SQ1).